Consider the following 570-residue polypeptide: CRISPR-associated protein Cas8a1/Csx13 (570 aa).

Disordered regions lie at residues 1–23 (MACMAPRGPAAIPHPSSERAGLR) and 551–570 (GGEAAELEDADEAAGASEQS).

Belongs to the CRISPR-associated protein Cas8a1/Csx13 family. Myxan subtype subfamily.

Its function is as follows. CRISPR (clustered regularly interspaced short palindromic repeat) is an adaptive immune system that provides protection against mobile genetic elements (viruses, transposable elements and conjugative plasmids). CRISPR clusters contain spacers, sequences complementary to antecedent mobile elements, and target invading nucleic acids. CRISPR clusters are transcribed and processed into CRISPR RNA (crRNA). In terms of biological role, functions in an unknown fashion to stimulate transcription of fruA independently of the intracellular A- and E-developmental signals. This is CRISPR-associated protein Cas8a1/Csx13 (devT) from Myxococcus xanthus (strain DK1622).